The sequence spans 316 residues: D-alanine--D-alanine ligase (316 aa).

Residues 104–303 (KRVWLQHGLP…YADLCVAILA (200 aa)) form the ATP-grasp domain. 130 to 185 (PDRLGLPLILKPPHEGSTVGITKVAGYSDMKAAYELAARFDAEVLAEQFITGRELT) is a binding site for ATP. Residues D257, E270, and N272 each contribute to the Mg(2+) site.

Belongs to the D-alanine--D-alanine ligase family. Mg(2+) serves as cofactor. The cofactor is Mn(2+).

Its subcellular location is the cytoplasm. It carries out the reaction 2 D-alanine + ATP = D-alanyl-D-alanine + ADP + phosphate + H(+). It participates in cell wall biogenesis; peptidoglycan biosynthesis. In terms of biological role, cell wall formation. This is D-alanine--D-alanine ligase from Bordetella bronchiseptica (strain ATCC BAA-588 / NCTC 13252 / RB50) (Alcaligenes bronchisepticus).